The sequence spans 575 residues: V-type ATP synthase alpha chain (575 aa).

An ATP-binding site is contributed by 238–245 (GPFGAGKT).

This sequence belongs to the ATPase alpha/beta chains family.

It carries out the reaction ATP + H2O + 4 H(+)(in) = ADP + phosphate + 5 H(+)(out). Functionally, produces ATP from ADP in the presence of a proton gradient across the membrane. The V-type alpha chain is a catalytic subunit. This is V-type ATP synthase alpha chain (atpA) from Borreliella burgdorferi (strain ATCC 35210 / DSM 4680 / CIP 102532 / B31) (Borrelia burgdorferi).